A 104-amino-acid chain; its full sequence is Large ribosomal subunit protein uL24 (104 aa).

Belongs to the universal ribosomal protein uL24 family. In terms of assembly, part of the 50S ribosomal subunit.

One of two assembly initiator proteins, it binds directly to the 5'-end of the 23S rRNA, where it nucleates assembly of the 50S subunit. In terms of biological role, one of the proteins that surrounds the polypeptide exit tunnel on the outside of the subunit. The protein is Large ribosomal subunit protein uL24 of Pseudomonas syringae pv. syringae (strain B728a).